The primary structure comprises 184 residues: Protein FAM89A (184 aa).

Residues 148–184 are disordered; it reads YFQEQNSLHDRRDRGPPRDLSLPVSSLSSSDWILESI. Basic and acidic residues predominate over residues 154–164; that stretch reads SLHDRRDRGPP. Positions 167–184 are enriched in low complexity; that stretch reads LSLPVSSLSSSDWILESI.

This sequence belongs to the FAM89 family.

This is Protein FAM89A (FAM89A) from Homo sapiens (Human).